The chain runs to 1407 residues: YEATS domain-containing protein 2 (1407 aa).

Residue Lys-9 forms a Glycyl lysine isopeptide (Lys-Gly) (interchain with G-Cter in SUMO2) linkage. The stretch at 54–80 (MKNKEHEIDVIDQRLIEARRMMDKLRA) forms a coiled coil. A Glycyl lysine isopeptide (Lys-Gly) (interchain with G-Cter in SUMO2) cross-link involves residue Lys-113. A disordered region spans residues 116–196 (LESPSRSSSP…SHKRELRNAD (81 aa)). A phosphoserine mark is found at Ser-118, Ser-120, and Ser-157. A compositionally biased stretch (polar residues) spans 119 to 148 (PSRSSSPTNQRSETPSANHSESDSLSQHND). Residues 149–165 (FLSDKDNNSNVDVEERP) are compositionally biased toward basic and acidic residues. Lys-189 participates in a covalent cross-link: Glycyl lysine isopeptide (Lys-Gly) (interchain with G-Cter in SUMO2). Residues 201–346 (ETSRLFVKKT…EDSVYPQSSE (146 aa)) enclose the YEATS domain. Histone H3K27cr binding stretches follow at residues 260 to 262 (HPS) and 283 to 285 (WGE). Thr-406 is subject to Phosphothreonine. A phosphoserine mark is found at Ser-446, Ser-462, Ser-464, Ser-470, and Ser-472. A disordered region spans residues 462-540 (SGSPISTPSP…GTGSPIPKIH (79 aa)). Thr-477 is subject to Phosphothreonine. Lys-486 is covalently cross-linked (Glycyl lysine isopeptide (Lys-Gly) (interchain with G-Cter in SUMO2)). Residues 511-520 (STPSTGSPTS) are compositionally biased toward low complexity. Phosphoserine is present on Ser-534. Lys-550 participates in a covalent cross-link: Glycyl lysine isopeptide (Lys-Gly) (interchain with G-Cter in SUMO2). Ser-573 carries the phosphoserine modification. Lys-590 participates in a covalent cross-link: Glycyl lysine isopeptide (Lys-Gly) (interchain with G-Cter in SUMO2). Phosphoserine is present on Ser-625. Glycyl lysine isopeptide (Lys-Gly) (interchain with G-Cter in SUMO2) cross-links involve residues Lys-647 and Lys-771. The tract at residues 791–833 (SGSAAAGGSGSSGAGGGSGGGGGSGAGGTPSTSGPGGGPQHLT) is disordered. Positions 795–829 (AAGGSGSSGAGGGSGGGGGSGAGGTPSTSGPGGGP) are enriched in gly residues. A Glycyl lysine isopeptide (Lys-Gly) (interchain with G-Cter in SUMO2) cross-link involves residue Lys-908. Residue Lys-1095 forms a Glycyl lysine isopeptide (Lys-Gly) (interchain with G-Cter in SUMO1); alternate linkage. Lys-1095 participates in a covalent cross-link: Glycyl lysine isopeptide (Lys-Gly) (interchain with G-Cter in SUMO2); alternate. Lys-1115 participates in a covalent cross-link: Glycyl lysine isopeptide (Lys-Gly) (interchain with G-Cter in SUMO2). Phosphothreonine is present on Thr-1204. Glycyl lysine isopeptide (Lys-Gly) (interchain with G-Cter in SUMO2) cross-links involve residues Lys-1207 and Lys-1270.

In terms of assembly, component of the ADA2A-containing complex (ATAC), composed of KAT14, KAT2A, TADA2L, TADA3L, ZZ3, MBIP, WDR5, YEATS2, SGF29 and DR1.

The protein localises to the nucleus. Chromatin reader component of the ATAC complex, a complex with histone acetyltransferase activity on histones H3 and H4. YEATS2 specifically recognizes and binds histone H3 crotonylated at 'Lys-27' (H3K27cr). Crotonylation marks active promoters and enhancers and confers resistance to transcriptional repressors. In Mus musculus (Mouse), this protein is YEATS domain-containing protein 2.